The chain runs to 219 residues: Probable GTP-binding protein EngB (219 aa).

The EngB-type G domain maps to 24–207 (VQPEIAFAGR…HALIESWVRP (184 aa)). Residues 32–39 (GRSNAGKS), 59–63 (GRTQH), 81–84 (DLPG), 148–151 (TKCD), and 186–188 (FSA) each bind GTP. Positions 39 and 61 each coordinate Mg(2+).

Belongs to the TRAFAC class TrmE-Era-EngA-EngB-Septin-like GTPase superfamily. EngB GTPase family. The cofactor is Mg(2+).

In terms of biological role, necessary for normal cell division and for the maintenance of normal septation. This chain is Probable GTP-binding protein EngB, found in Burkholderia multivorans (strain ATCC 17616 / 249).